Consider the following 214-residue polypeptide: Endothelial cell-specific chemotaxis regulator (214 aa).

The N-terminal stretch at 1-18 is a signal peptide; sequence MRLGSAILGLLLLQGYSS. The Extracellular segment spans residues 19-130; sequence QPTTTQTSQE…PTPTSESVLT (112 aa). The segment at 23 to 107 is disordered; that stretch reads TQTSQEILQK…DATPSPETTS (85 aa). Residues 28–57 show a composition bias toward polar residues; that stretch reads EILQKSSQVSLVSNQPVTPRSSTMDKQSLS. Residues 80 to 90 are compositionally biased toward low complexity; that stretch reads RSSSSSSSSSS. The chain crosses the membrane as a helical span at residues 131 to 151; that stretch reads VAAFGVISFIVILVVVVIILV. The Cytoplasmic portion of the chain corresponds to 152-214; the sequence is SVVSLRFKCR…KGSMSAEKIL (63 aa). Residues 163 to 184 form a disordered region; that stretch reads NKESEDPQKPGSSGLSESCSTA. Positions 172–184 are enriched in polar residues; the sequence is PGSSGLSESCSTA. Phosphoserine is present on residues serine 204 and serine 207.

The protein belongs to the ECSCR family. Interacts with FLNA. Interacts with the 20S proteasome subunit PSMA7. In terms of processing, may be heavily O-glycosylated. As to expression, expressed in all tissues examined, highest expression was observed in lung and spleen endothelial cells.

The protein resides in the cell membrane. It is found in the cytoplasm. Functionally, regulates endothelial chemotaxis and tube formation. Has a role in angiogenesis and apoptosis via modulation of the actin cytoskeleton and facilitation of proteasomal degradation of the apoptosis inhibitors BIRC3/IAP1 and BIRC2/IAP2. The chain is Endothelial cell-specific chemotaxis regulator (Ecscr) from Mus musculus (Mouse).